The chain runs to 197 residues: LQLYFPDISRFKDPDASQPEIMLYVAGKTFQWGVLIFSSVTVLASGTAAHAGVSRLMYVMGRDGVFPTRFFGYVHPKRRTPAWNVLLVXAIALLAIKLDLVTATAPINLGALVAFTFVNLSVISQFWIREKRNKTLKDHFNYLILPVCGALTVGALWINLEESSMVLGLIWGGIGLVYXACVTKSFRNPVPQYEDVA.

A run of 5 helical transmembrane segments spans residues 33-53 (GVLI…HAGV), 85-105 (VLLV…TATA), 107-127 (INLG…SQFW), 140-160 (FNYL…WINL), and 163-183 (SSMV…ACVT).

Belongs to the amino acid-polyamine-organocation (APC) superfamily.

It localises to the cell inner membrane. It carries out the reaction putrescine(in) + H(+)(in) = putrescine(out) + H(+)(out). Functionally, putrescine importer. The polypeptide is Probable low-affinity putrescine importer PlaP (plaP) (Klebsiella pneumoniae).